A 359-amino-acid chain; its full sequence is Mitochondrial glutathione transporter SLC25A39 (359 aa).

At 1 to 14 the chain is on the mitochondrial intermembrane side; it reads MADQDPGGISPLQQ. 3 Solcar repeats span residues 9–151, 159–243, and 253–347; these read ISPL…LKAF, SDLY…VKSW, and TSVG…GKNF. The chain crosses the membrane as a helical span at residues 15 to 35; the sequence is MVASGAGAVVTSLFMTPLDVV. Residues 36 to 121 are Mitochondrial matrix-facing; sequence KVRLQSQRPS…VKIVRHEGTR (86 aa). [2Fe-2S] cluster contacts are provided by cysteine 74, cysteine 78, cysteine 88, and cysteine 94. The chain crosses the membrane as a helical span at residues 122-142; that stretch reads TLWSGLPATLVMTVPATAAYF. At 143-164 the chain is on the mitochondrial intermembrane side; it reads TAYDQLKAFLCGRALTSDLYAP. A helical membrane pass occupies residues 165–185; that stretch reads MVAGALARLGTVTVISPLELV. Residues 186–214 lie on the Mitochondrial matrix side of the membrane; sequence RTKLQAQHLSYRELGTCVRAAVAQGGWRS. A helical transmembrane segment spans residues 215-235; the sequence is LWLGWGPTALRDVPFSALYWF. Residues 236–255 lie on the Mitochondrial intermembrane side of the membrane; sequence NYELVKSWLSGLRPKDQTSV. The chain crosses the membrane as a helical span at residues 256–276; sequence GISFVAGGISGMVAATLTLPF. Topologically, residues 277 to 317 are mitochondrial matrix; sequence DVVKTQRQVALGAVEALRVMPLNTDSTWLLLRRILAESGTR. Residues 318-338 form a helical membrane-spanning segment; that stretch reads GLFAGFLPRIIKAAPSCAIMI. Over 339–359 the chain is Mitochondrial intermembrane; it reads STYEFGKNFFQRLNREQLLSP.

Belongs to the mitochondrial carrier (TC 2.A.29) family. Post-translationally, cleaved and degraded by AFG3L2; degradation by AFG3L2 is regulated by the ability of SLC25A39 to bind iron-sulfur. In absence of mitochondrial glutathione, SLC25A39 binds iron-sulfur, preventing cleavage and degradation by AFG3L2. The presence of mitochondrial glutathione prevents iron-sulfur-binding to SLC25A39, promoting cleavage and degradation by AFG3L2.

The protein resides in the mitochondrion inner membrane. It catalyses the reaction glutathione(in) = glutathione(out). With respect to regulation, the activity of SLC25A39 is regulated by levels of mitochondrial glutathione via its ability to bind [2Fe-2S] iron-sulfur cluster. Upon physiological levels of mitochondrial glutathione, glutathione prevents iron-sulfur-binding to SLC25A39 promoting cleavage and degradation by AFG3L2. Upon depletion of mitochondrial glutathione, SLC25A39 binds iron-sulfur, preventing cleavage and degradation by AFG3L2. Functionally, mitochondrial transporter required for glutathione import into mitochondria. Glutathione, which plays key roles in oxidative metabolism, is produced exclusively in the cytosol and is imported in many organelles. Mitochondrial glutathione is required for the activity and stability of proteins containing iron-sulfur clusters, as well as erythropoiesis. This is Mitochondrial glutathione transporter SLC25A39 (SLC25A39) from Bos taurus (Bovine).